The chain runs to 155 residues: NADH-ubiquinone oxidoreductase chain 6 (155 aa).

4 helical membrane-spanning segments follow: residues 10–30 (ILAI…VLFV), 43–63 (LMGI…FLFI), 75–95 (GTIH…LDLS), and 133–153 (AIPM…AIAI).

Belongs to the complex I subunit 6 family.

Its subcellular location is the mitochondrion membrane. It catalyses the reaction a ubiquinone + NADH + 5 H(+)(in) = a ubiquinol + NAD(+) + 4 H(+)(out). In terms of biological role, core subunit of the mitochondrial membrane respiratory chain NADH dehydrogenase (Complex I) that is believed to belong to the minimal assembly required for catalysis. Complex I functions in the transfer of electrons from NADH to the respiratory chain. The immediate electron acceptor for the enzyme is believed to be ubiquinone. This Candida parapsilosis (Yeast) protein is NADH-ubiquinone oxidoreductase chain 6 (ND6).